Reading from the N-terminus, the 547-residue chain is Ribosome protection protein VmlR (547 aa).

The region spanning 5–200 (VTLTNVSYEV…FREKKRLTQQ (196 aa)) is the ABC transporter 1 domain. An ATP-binding site is contributed by 37–44 (GKNGAGKS). The tract at residues 183–289 (GNYSGYMKFR…SIDTTHKTGK (107 aa)) is antibiotic resistance domain (ARD). Coiled-coil stretches lie at residues 193–222 (EKKR…GLAS) and 245–269 (AKRT…AKAE). One can recognise an ABC transporter 2 domain in the interval 292–504 (LEVQNVTKAF…REELRLKLET (213 aa)). 324-331 (GPNGSGKT) is an ATP binding site. A C-terminal extension (CTE) region spans residues 483–547 (KQLNDVPSER…KELDHQDKKD (65 aa)). A coiled-coil region spans residues 488-543 (VPSERNEREELRLKLETERQEVLGKLSFMTPNDKGYKELDQAFNELTKRIKELDHQ).

The protein belongs to the ABC transporter superfamily. ABCF family. ARE2 subfamily. As to quaternary structure, binds within the E-site of the 70S ribosome, where it contacts ribosomal proteins L1, L5, L33-1, S7, S11, the 16 and 23S rRNAs and the acceptor arm of the P-site tRNA.

It is found in the cytoplasm. Functionally, recognizes and binds in the vacant E-site of ribosomes stalled by some peptidyltransferase center (PTC)-targeting antibiotics. Makes contact with the PTC and both ribosomal subunits. Induces conformational changes in the P-site, which allows it to dislodge the antibiotic from its PTC binding site. Binds to ribosomes either directly following translation initation or subsequent to E tRNA release during elongation. Involved in resistance to a narrow spectrum of antibiotics (the streptogramin A antibiotic virginiamycin M, the lincosamide antibiotic lincomycin and the pleuromutilin antibiotic tiamulin). The chain is Ribosome protection protein VmlR from Bacillus subtilis (strain 168).